The primary structure comprises 378 residues: Protein RecA (378 aa).

Gly79–Thr86 serves as a coordination point for ATP.

This sequence belongs to the RecA family.

It localises to the cytoplasm. In terms of biological role, can catalyze the hydrolysis of ATP in the presence of single-stranded DNA, the ATP-dependent uptake of single-stranded DNA by duplex DNA, and the ATP-dependent hybridization of homologous single-stranded DNAs. It interacts with LexA causing its activation and leading to its autocatalytic cleavage. This is Protein RecA from Streptococcus pyogenes serotype M49 (strain NZ131).